A 251-amino-acid polypeptide reads, in one-letter code: MNLNSIPAFQDNYIWVLTNDEGRCVIVDPGEAAPVLKAIAEHKWMPEAIFLTHHHHDHVGGVKELLQHFPQMTVYGPAETQDKGATHLVGDGDTIRVLGEKFTLFATPGHTLGHVCYFSHPYLFCGDTLFSGGCGRLFEGTPSQMYQSLMKINSLPDDTLICCAHEYTLANIKFALSILPHDSFINEYYRKVKELRVKKQMTLPVILKNERKINLFLRTEDIDLINEINKETILQQPEARFAWLRSKKDTF.

Positions 53, 55, 57, 58, 110, 127, and 165 each coordinate Zn(2+).

Belongs to the metallo-beta-lactamase superfamily. Glyoxalase II family. Monomer. Zn(2+) is required as a cofactor.

It catalyses the reaction an S-(2-hydroxyacyl)glutathione + H2O = a 2-hydroxy carboxylate + glutathione + H(+). Its pathway is secondary metabolite metabolism; methylglyoxal degradation; (R)-lactate from methylglyoxal: step 2/2. Its function is as follows. Thiolesterase that catalyzes the hydrolysis of S-D-lactoyl-glutathione to form glutathione and D-lactic acid. The sequence is that of Hydroxyacylglutathione hydrolase from Salmonella agona (strain SL483).